A 461-amino-acid polypeptide reads, in one-letter code: Cysteine--tRNA ligase (461 aa).

A Zn(2+)-binding site is contributed by Cys29. The 'HIGH' region signature appears at 31–41 (MTVYDLCHLGH). Cys213, His238, and Glu242 together coordinate Zn(2+). A 'KMSKS' region motif is present at residues 270–274 (KMSKS). Residue Lys273 coordinates ATP.

The protein belongs to the class-I aminoacyl-tRNA synthetase family. Monomer. Zn(2+) serves as cofactor.

The protein resides in the cytoplasm. The catalysed reaction is tRNA(Cys) + L-cysteine + ATP = L-cysteinyl-tRNA(Cys) + AMP + diphosphate. In Delftia acidovorans (strain DSM 14801 / SPH-1), this protein is Cysteine--tRNA ligase.